Reading from the N-terminus, the 465-residue chain is Protein Loquacious (465 aa).

Residues 1 to 337 (MDQENFHGSS…DSICGELEGE (337 aa)) form a necessary for enhancing pre-miRNA processing by Dcr-1 region. A not required for interaction with Dcr-1 region spans residues 1–379 (MDQENFHGSS…TLKNATGKKL (379 aa)). The tract at residues 1 to 392 (MDQENFHGSS…QKTCLKNNKI (392 aa)) is important for homodimerization and interaction with Dcr-1. The segment at 129 to 211 (NGLAMKTPVS…DKLIGAQLPE (83 aa)) is sufficient for binding RNA. The segment at 129 to 322 (NGLAMKTPVS…WMRLQETPID (194 aa)) is necessary for promoting preferential binding of Dcr-2 to the less stably base paired ends of siRNAs. The DRBM 1 domain maps to 135-206 (TPVSILQELL…ARALIDKLIG (72 aa)). Positions 209–249 (LPESPSSSAGPSVTGLTVAGSGGDGNANATGGGDASDKTVG) are enables simultaneous binding of both DRBM 1 and 2 domains to dsRNA. Positions 210–246 (PESPSSSAGPSVTGLTVAGSGGDGNANATGGGDASDK) are disordered. Polar residues predominate over residues 211 to 223 (ESPSSSAGPSVTG). The interval 220 to 465 (SVTGLTVAGS…LEYLKIMTKK (246 aa)) is necessary and sufficient for enhancing processing of pre-miRNAs by Dcr-1. The span at 228-242 (GSGGDGNANATGGGD) shows a compositional bias: gly residues. The tract at residues 245–322 (DKTVGNPIGW…WMRLQETPID (78 aa)) is sufficient for binding RNA. The region spanning 250 to 318 (NPIGWLQEMC…AHRMWMRLQE (69 aa)) is the DRBM 2 domain. Residues 308–309 (AA) form a necessary for binding pre-miRNA region. The interval 338–359 (PRSSENYYGELKDISVPTLTTQ) is required for binding to Dcr-2 and to fully enhance Dcr-2 mediated cleavage of 3' overhanging termini (3'ovr) and blunt termini (BLT) dsRNAs. However, this region is dispensable for binding the dsRNA substrates. The tract at residues 340–465 (SSENYYGELK…LEYLKIMTKK (126 aa)) is necessary for interaction with Dcr-1. The segment at 392-463 (IDYIKLLGEI…NALEYLKIMT (72 aa)) is sufficent for binding to Dcr-1. The DRBM 3 domain maps to 393–461 (DYIKLLGEIA…AQNALEYLKI (69 aa)).

As to quaternary structure, homodimer. In terms of assembly, interacts with dicer enzyme Dcr-1. Component of the miRNA-directed RNA-induced loading complex (miRLC), composed of at least Dcr-1, AGO1 and loqs isoform PB (loqs-PB), which processes pre-miRNAs and loads the resulting miRNAs into the Argonaute 1 (AGO1)-containing RNA-induced silencing complex (miRISC) to target the selective destruction of homologous RNAs. Interacts (via DRBM 3 domain) with dicer enzyme Dcr-1 (via helicase domain). Different regions of the Dcr-1-loqs-PB heterodimer collaborate to recognize, bind and position the pre-miRNA for Dcr-1 mediated cleavage. In the absence of miRNA substrates, the heterodimer favors a closed, catalytically incompetent, conformation, whereas binding of authentic pre-miRNA substrates stabilizes the relatively rare open, catalytically competent, conformation of the heterodimer. During substrate recognition, the Dcr-1 PAZ domain and pre-miRNA interact with the DRBM 1 domain of loqs-PB, which likely contributes to substrate recognition and stabilization. At the miRNA binding stage, the Dcr-1 DRBM domain and the loqs-PB DRBM domains then bind the pre-miRNA in tandem to form a tight 'belt' around the pre-miRNA stem, the pre-miRNA loop is docked in the loop-binding region formed by DUF283, DRBM and part of the helicase domain of Dcr-1, and the loqs-PB DRBM 1 and the wing domain of Dcr-1 act together to bind the 5' and 3' pre-miRNA termini within the PAZ and platform domains of Dcr-1. These interactions between the proteins and their pre-miRNA substrate stabilize a distorted form of the pre-miRNA and position the scissile phosphodiester bonds of the pre-miRNA at the RNase III catalytic cleavage sites of Dcr-1. Following Dcr-1 mediated cleavage, the miRNA duplex remains bound to loqs-PB DRBM 1, which dissociates from the Dcr-1 RNase III 1 domain but remains in contact with the PAZ and wing domains suggesting that the heterodimer presents the mature miRNA to AGO2 for loading into the RNA-induced silencing complex (miRISC). As to quaternary structure, able to interact with dicer enzyme Dcr-1. However, the relevance of such an interaction is unclear in vivo and another report found that it did not interact with Dcr-1. In terms of assembly, monomer. Interacts (via C-terminus) with dicer enzyme Dcr-2 (via N-terminus); interaction is required for RNAi activity in producing siRNAs from a subset of endo- and exo-dsRNAs, and in the alternative siRLC, the interaction enhances the binding preference of the protein for the thermodynamically more stable ends of endogenous siRNAs. Interaction with Dcr-2 is RNA independent, however the isoform must bind both dsRNA and Dcr-2 to enhance Dcr-2 cleavage activity. Does not interact with Dcr-1. As to expression, strong expression in males and females. Expression in ovaries is relatively weak. Strong expression in females and relatively weak expression in males. Strong expression in ovaries.

It is found in the cytoplasm. Its subcellular location is the cytosol. Its function is as follows. Double-stranded RNA-binding protein which can function in gene silencing by acting with Dcr-1 to enhance its ATP-independent processing of a specific subset of precursor micro-RNAs (pre-miRNAs) to mature miRNAs. Some reports found it was able to enhance the efficiency of pre-miRNA processing by Dcr-1, and can shift the cleavage site of Dcr-1 altering the length of the mature miRNAs produced by Dcr-1 alone. However, in contrast to isoform PB, it is not necessary or sufficient for enhancing miRNA biogenesis, and is not required for development or female germline stem cell (GSC) maintenance. Another report also found that it decreases binding of Dcr-1 to the miRNA substrate let-7. Functionally, double-stranded RNA-binding protein which functions in gene silencing by acting with Dcr-1 to enhance its ATP-independent processing of a specific subset of precursor micro-RNAs (pre-miRNAs) to mature miRNAs. Function is essential for development and female germline stem cell (GSC) maintenance. Functions in miRNA-mediated gene silencing by enhancing the binding affinity and specific pre-miRNA processing activity of Dcr-1, and as part of the loqs-PB-Dcr-1 complex, is involved in substrate discrimination, correctly positioning the pre-miRNA in the Dcr-1 catalytic center for cleavage, and miRNA loading into the Argonaute 1 (Ago1)-containing RNA-induced silencing complex (miRISC). Increases the binding affinity of Dcr-1 to pre-miRNAs, thereby increasing dicing efficiency and broadening the range of substrates that can be processed by the dicer. It may also confer the substrate specificity of Dcr-1 towards pre-miRNAs, as in its absence Dcr-1 displays siRNA-generating activity towards long dsRNA substrates. It can also shift the cleavage site of Dcr-1 for a small number of pre-miRNAs, changing the length of the mature miRNAs produced by Dcr-1 alone. Increases the range of pre-miRNAs that can be processed by Dcr-1, by enhancing the dicing of suboptimal hairpin substrates including ones with mismatches at the dicing site. This function may also promote the generation of novel miRNA genes as it appears to have an important role in processing evolutionarily young miRNA genes, suggesting that it may also enhance dicing of substrates that have not acquired hairpin features required for efficient miRNA processing. As newly emerged miRNAs can have deleterious or beneficial effects on fitness, this function is likely part of a regulatory system that prevents excessive emergence of active miRNA genes and thus keeps them within an optimal range. Also forms a RISC loading complex (miRLC) with Dcr-1 to mediate Ago1-loading of mature miRNAs into the RNA-induced silencing complex (miRISC). In female ovaries, required for Dcr-1 to generate the twenty-three nucleotide isomiR variant of miR-307a which is able to repress its targets Gk2 and tara. In terms of biological role, double-stranded RNA-binding protein which has an essential role in gene silencing (RNAi) by acting with Dcr-2 to enhance its ATP-dependent processing of a subset of endogenous (endo) and exogenous (exo) dsRNAs into short interfering RNAs (siRNAs). Functions in RNAi by increasing the initial binding affinity of Dcr-2 to certain dsRNA substrates, and in the absence of r2d2, may also function in siRNA loading into the Argonaute 2 (AGO2)-containing RNA-induced silencing complex (siRISC) and guide strand selection for target silencing by the siRISC. Promotes Dcr-2 cleavage of a subset of dsRNAs, including endo-dsRNAs derived from convergent transcription, inverted repeats and transposons. Also enables Dcr-2 to produce hairpin-derived endo-siRNAs in the presence of cellular inhibitory inorganic phosphate, likely by increasing the binding affinity of the enzyme to the hairpin dsRNAs allowing the dsRNA to displace phosphate bound to Dcr-2. According to many reports, the cleavage reaction mode of Dcr-2 changes according to the termini of the dsRNA substrate, with the enzyme displaying a preference for processing blunt termini (BLT), likely non-self dsRNAs, over dsRNAs with 2 nucleotides 3' overhanging (3'ovr) termini, which are typically the structure of endo-dsRNAs. According to many reports, interaction with Loqs-PD modifies the molecular recognition mechanisms of Dcr-2 towards sub-optimal 3'ovr dsRNA substrates and thus enables the dicer to cleave endo-dsRNA templates with diverse termini. However, according to another report, the mode of cleavage reaction is not affected by the presence or absence of loqs-PD. In the absence of r2d2, may also form an alternative RISC loading complex (siRLC) with Dcr-2 to mediate AGO2-loading of endo- and exo-siRNAs into the RNA-induced silencing complex (siRISC). Many reports suggest that loqs-PD and r2d2 function independently with dcr-2 in distinct siRNA pathways, and may even compete for binding to the enzyme. Loaded siRNAs serve as a guide to direct the siRISC to complementary RNAs to degrade them or prevent their translation. The siRLC plays an important role in the ATP-dependent asymmetry sensing of the duplex, and is therefore also responsible for the selection of the strand that ultimately acts as the guide siRNA for the siRISC. Thermodynamically asymmetric endo-siRNAs can be pre-oriented in the siRLC by the Loqs-PD and DCr-2 complex, which preferentially binds to the most thermodynamically stable strand prior to loading into the siRISC. Appears to be involved in promoting double-strand breaks (DSBs) following exposure to a low-dose/dose-rate (LDR) of ionizing radiation. This chain is Protein Loquacious, found in Drosophila melanogaster (Fruit fly).